We begin with the raw amino-acid sequence, 281 residues long: CDAN1-interacting nuclease 1 (281 aa).

Thr114 is modified (phosphothreonine).

It is found in the nucleus. The protein localises to the cytoplasm. Its function is as follows. Plays a role in erythroid cell differentiation. The chain is CDAN1-interacting nuclease 1 from Mus musculus (Mouse).